We begin with the raw amino-acid sequence, 565 residues long: Proline--tRNA ligase (565 aa).

It belongs to the class-II aminoacyl-tRNA synthetase family. ProS type 1 subfamily. In terms of assembly, homodimer.

The protein localises to the cytoplasm. It carries out the reaction tRNA(Pro) + L-proline + ATP = L-prolyl-tRNA(Pro) + AMP + diphosphate. In terms of biological role, catalyzes the attachment of proline to tRNA(Pro) in a two-step reaction: proline is first activated by ATP to form Pro-AMP and then transferred to the acceptor end of tRNA(Pro). As ProRS can inadvertently accommodate and process non-cognate amino acids such as alanine and cysteine, to avoid such errors it has two additional distinct editing activities against alanine. One activity is designated as 'pretransfer' editing and involves the tRNA(Pro)-independent hydrolysis of activated Ala-AMP. The other activity is designated 'posttransfer' editing and involves deacylation of mischarged Ala-tRNA(Pro). The misacylated Cys-tRNA(Pro) is not edited by ProRS. This Hydrogenobaculum sp. (strain Y04AAS1) protein is Proline--tRNA ligase.